A 400-amino-acid chain; its full sequence is Subtilisin-like protease CPC735_013700 (400 aa).

Residues 1-19 form the signal peptide; it reads MGFVKILSLSLAATAVADA. Residues 20 to 116 constitute a propeptide that is removed on maturation; sequence ATILSPRYPN…IEPNQIVTIS (97 aa). In terms of domain architecture, Inhibitor I9 spans 36-115; it reads YIVVMKDGVS…FIEPNQIVTI (80 aa). The Peptidase S8 domain maps to 126 to 400; the sequence is SWGLPRISVK…RKLLYNNSGK (275 aa). Catalysis depends on charge relay system residues Asp-161 and His-192. A glycan (N-linked (GlcNAc...) asparagine) is linked at Asn-252. Catalysis depends on Ser-346, which acts as the Charge relay system. An N-linked (GlcNAc...) asparagine glycan is attached at Asn-396.

This sequence belongs to the peptidase S8 family.

It is found in the secreted. Its function is as follows. Secreted subtilisin-like serine protease with keratinolytic activity that contributes to pathogenicity. The sequence is that of Subtilisin-like protease CPC735_013700 from Coccidioides posadasii (strain C735) (Valley fever fungus).